The chain runs to 292 residues: Glutamate racemase (292 aa).

Residues 28–29 and 60–61 each bind substrate; these read DS and YG. The Proton donor/acceptor role is filled by cysteine 91. A substrate-binding site is contributed by 92-93; it reads NT. Cysteine 200 acts as the Proton donor/acceptor in catalysis. 201-202 serves as a coordination point for substrate; it reads TH.

This sequence belongs to the aspartate/glutamate racemases family.

It catalyses the reaction L-glutamate = D-glutamate. It participates in cell wall biogenesis; peptidoglycan biosynthesis. Provides the (R)-glutamate required for cell wall biosynthesis. The chain is Glutamate racemase from Nostoc sp. (strain PCC 7120 / SAG 25.82 / UTEX 2576).